A 135-amino-acid polypeptide reads, in one-letter code: ATP synthase epsilon chain (135 aa).

Belongs to the ATPase epsilon chain family. As to quaternary structure, F-type ATPases have 2 components, CF(1) - the catalytic core - and CF(0) - the membrane proton channel. CF(1) has five subunits: alpha(3), beta(3), gamma(1), delta(1), epsilon(1). CF(0) has three main subunits: a, b and c.

It localises to the cell inner membrane. Produces ATP from ADP in the presence of a proton gradient across the membrane. This Rhodopseudomonas palustris (strain ATCC BAA-98 / CGA009) protein is ATP synthase epsilon chain.